A 128-amino-acid polypeptide reads, in one-letter code: SH2 domain-containing protein 1A (128 aa).

Residues 6-102 (VYHGKISRET…GIVIPLQYPV (97 aa)) enclose the SH2 domain. Positions 67–92 (DTAPGVHKRFFRKIKNLISAFQKPDQ) are interaction with FYN SH3 domain. K89 is subject to N6-acetyllysine. The interval 103 to 128 (EKKSSARSTQGATGRREDPDVFLKTP) is disordered. Over residues 116–128 (GRREDPDVFLKTP) the composition is skewed to basic and acidic residues.

As to quaternary structure, interacts with CD84, CD244, LY9, SLAMF1 and FYN. Interacts with NTRK1, NTRK2 and NTRK3.

The protein resides in the cytoplasm. Its function is as follows. Cytoplasmic adapter regulating receptors of the signaling lymphocytic activation molecule (SLAM) family such as SLAMF1, CD244, LY9, CD84, SLAMF6 and SLAMF7. In SLAM signaling seems to cooperate with SH2D1B/EAT-2. Initially it has been proposed that association with SLAMF1 prevents SLAMF1 binding to inhibitory effectors including INPP5D/SHIP1 and PTPN11/SHP-2. However, by simultaneous interactions, recruits FYN which subsequently phosphorylates and activates SLAMF1. Positively regulates CD244/2B4- and CD84-mediated natural killer (NK) cell functions. Can also promote CD48-, SLAMF6 -, LY9-, and SLAMF7-mediated NK cell activation. In the context of NK cell-mediated cytotoxicity enhances conjugate formation with target cells. May also regulate the activity of the neurotrophin receptors NTRK1, NTRK2 and NTRK3. The polypeptide is SH2 domain-containing protein 1A (SH2D1A) (Sus scrofa (Pig)).